Consider the following 165-residue polypeptide: Protein SprT (165 aa).

In terms of domain architecture, SprT-like spans 20–163 (EKLAQANLKL…RCVHCGEQLV (144 aa)). His78 lines the Zn(2+) pocket. Residue Glu79 is part of the active site. A Zn(2+)-binding site is contributed by His82.

This sequence belongs to the SprT family. It depends on Zn(2+) as a cofactor.

It localises to the cytoplasm. The sequence is that of Protein SprT from Shigella flexneri serotype 5b (strain 8401).